The sequence spans 289 residues: tRNA (adenine(58)-N(1))-methyltransferase catalytic subunit TRMT61A (289 aa).

N-acetylserine is present on serine 2. Substrate contacts are provided by residues 20–22 (LGH), 35–42 (QTQTRHGV), 64–65 (GW), 85–89 (QILYS), and 110–117 (SGTGSGSV). Residues leucine 87, 114–116 (SGS), glutamate 135, arginine 140, 163–164 (DV), and aspartate 181 each bind S-adenosyl-L-methionine. Substrate is bound by residues 180 to 183 (LDIP) and 205 to 212 (SFSPCIEQ). Residues 245–272 (LPPPDLGTGTDGPAGSDTSPFRSGTPMK) form a disordered region. Over residues 250-259 (LGTGTDGPAG) the composition is skewed to low complexity. Phosphoserine is present on serine 263. Threonine 278 lines the substrate pocket.

It belongs to the class I-like SAM-binding methyltransferase superfamily. TRM61 family. As to quaternary structure, heterotetramer; composed of two copies of TRMT6 and two copies of TRMT61A.

The protein localises to the nucleus. It carries out the reaction adenosine(58) in tRNA + S-adenosyl-L-methionine = N(1)-methyladenosine(58) in tRNA + S-adenosyl-L-homocysteine + H(+). The catalysed reaction is an adenosine in mRNA + S-adenosyl-L-methionine = an N(1)-methyladenosine in mRNA + S-adenosyl-L-homocysteine + H(+). Catalytic subunit of tRNA (adenine-N(1)-)-methyltransferase, which catalyzes the formation of N(1)-methyladenine at position 58 (m1A58) in initiator methionyl-tRNA. Catalytic subunit of mRNA N(1)-methyltransferase complex, which mediates methylation of adenosine residues at the N(1) position of a small subset of mRNAs: N(1) methylation takes place in tRNA T-loop-like structures of mRNAs and is only present at low stoichiometries. This Homo sapiens (Human) protein is tRNA (adenine(58)-N(1))-methyltransferase catalytic subunit TRMT61A (TRMT61A).